Reading from the N-terminus, the 689-residue chain is Methionine--tRNA ligase (689 aa).

The 'HIGH' region signature appears at 15–25 (PYANGPIHLGH). Residues cysteine 146, cysteine 149, cysteine 159, and cysteine 162 each coordinate Zn(2+). The 'KMSKS' region signature appears at 332–336 (KMSKS). Lysine 335 is a binding site for ATP. A tRNA-binding domain is found at 588 to 689 (DFAKIDLRIA…EGAQPGMRVK (102 aa)).

The protein belongs to the class-I aminoacyl-tRNA synthetase family. MetG type 1 subfamily. As to quaternary structure, homodimer. The cofactor is Zn(2+).

The protein localises to the cytoplasm. The catalysed reaction is tRNA(Met) + L-methionine + ATP = L-methionyl-tRNA(Met) + AMP + diphosphate. Its function is as follows. Is required not only for elongation of protein synthesis but also for the initiation of all mRNA translation through initiator tRNA(fMet) aminoacylation. The protein is Methionine--tRNA ligase of Shewanella baltica (strain OS223).